Reading from the N-terminus, the 121-residue chain is Large ribosomal subunit protein uL18 (121 aa).

Belongs to the universal ribosomal protein uL18 family. In terms of assembly, part of the 50S ribosomal subunit; part of the 5S rRNA/L5/L18/L25 subcomplex. Contacts the 5S and 23S rRNAs.

Functionally, this is one of the proteins that bind and probably mediate the attachment of the 5S RNA into the large ribosomal subunit, where it forms part of the central protuberance. In Mesomycoplasma hyopneumoniae (strain J / ATCC 25934 / NCTC 10110) (Mycoplasma hyopneumoniae), this protein is Large ribosomal subunit protein uL18.